A 147-amino-acid chain; its full sequence is Hemoglobin subunit beta (147 aa).

Valine 2 is subject to N-acetylvaline. The region spanning 3 to 147 (HLTGEEKSAV…VANALAHKYH (145 aa)) is the Globin domain. Threonine 13 carries the post-translational modification Phosphothreonine. Serine 45 is subject to Phosphoserine. An N6-acetyllysine modification is found at lysine 60. Histidine 64 is a heme b binding site. At lysine 83 the chain carries N6-acetyllysine. Heme b is bound at residue histidine 93. Cysteine 94 carries the S-nitrosocysteine modification. At lysine 145 the chain carries N6-acetyllysine.

It belongs to the globin family. As to quaternary structure, heterotetramer of two alpha chains and two beta chains. In terms of tissue distribution, red blood cells.

Involved in oxygen transport from the lung to the various peripheral tissues. The protein is Hemoglobin subunit beta (HBB) of Ateles paniscus (Black spider monkey).